Reading from the N-terminus, the 303-residue chain is UDP-3-O-acyl-N-acetylglucosamine deacetylase (303 aa).

Zn(2+) contacts are provided by His-78, His-237, and Asp-241. His-264 serves as the catalytic Proton donor.

It belongs to the LpxC family. It depends on Zn(2+) as a cofactor.

It carries out the reaction a UDP-3-O-[(3R)-3-hydroxyacyl]-N-acetyl-alpha-D-glucosamine + H2O = a UDP-3-O-[(3R)-3-hydroxyacyl]-alpha-D-glucosamine + acetate. The protein operates within glycolipid biosynthesis; lipid IV(A) biosynthesis; lipid IV(A) from (3R)-3-hydroxytetradecanoyl-[acyl-carrier-protein] and UDP-N-acetyl-alpha-D-glucosamine: step 2/6. Its function is as follows. Catalyzes the hydrolysis of UDP-3-O-myristoyl-N-acetylglucosamine to form UDP-3-O-myristoylglucosamine and acetate, the committed step in lipid A biosynthesis. This Xanthomonas campestris pv. campestris (strain 8004) protein is UDP-3-O-acyl-N-acetylglucosamine deacetylase.